The following is a 372-amino-acid chain: Cytochrome b (372 aa).

The next 4 membrane-spanning stretches (helical) occupy residues 25–45 (FGSM…FLAI), 69–90 (WIMQ…YIHI), 105–125 (WLSG…GYVL), and 170–190 (FFAL…IHII). The heme b site is built by His75 and His89. 2 residues coordinate heme b: His174 and His188. His193 provides a ligand contact to a ubiquinone. Helical transmembrane passes span 218-238 (YKDM…LSFL), 280-300 (LGGT…PFTH), 312-332 (LSQT…WTAT), and 339-358 (FITI…IMTP).

This sequence belongs to the cytochrome b family. The cytochrome bc1 complex contains 3 respiratory subunits (MT-CYB, CYC1 and UQCRFS1), 2 core proteins (UQCRC1 and UQCRC2) and probably 6 low-molecular weight proteins. It depends on heme b as a cofactor.

The protein localises to the mitochondrion inner membrane. Its function is as follows. Component of the ubiquinol-cytochrome c reductase complex (complex III or cytochrome b-c1 complex) that is part of the mitochondrial respiratory chain. The b-c1 complex mediates electron transfer from ubiquinol to cytochrome c. Contributes to the generation of a proton gradient across the mitochondrial membrane that is then used for ATP synthesis. The chain is Cytochrome b (MT-CYB) from Aspidelaps scutatus (Shield-nose snake).